The sequence spans 856 residues: V-type proton ATPase subunit a (856 aa).

Topologically, residues 1–409 are cytoplasmic; sequence MAPKQDTPFR…NAYGTATYQE (409 aa). Residues 410-428 traverse the membrane as a helical segment; it reads VNPAIPVIVTFPFLFAVMF. At 429-430 the chain is on the vacuolar side; sequence GD. The helical transmembrane segment at 431–447 threads the bilayer; that stretch reads FGHALIMLCAALAMIYW. Residues 448–460 lie on the Cytoplasmic side of the membrane; it reads EKPLKKVTFELFA. A helical membrane pass occupies residues 461-490; the sequence is MVFYGRYIVLVMAVFSVYTGLIYNDVFSKS. Over 491-544 the chain is Vacuolar; it reads MTLFDSQWKWVVPENFKEGMTVKAVLREPNGYRYPFGLDWRWHGTENELLFINS. The helical transmembrane segment at 545 to 564 threads the bilayer; sequence YKMKMAIILGWAHMTYSLCF. The Cytoplasmic segment spans residues 565–582; sequence SYINARHFKRPIDIWGNF. Residues 583-603 form a helical membrane-spanning segment; sequence VPGMIFFQSIFGYLVLCIIYK. Over 604–648 the chain is Vacuolar; sequence WSVDWFGTGRQPPGLLNMLIYMFLQPGTLDGGVELYPGQATVQVI. A helical transmembrane segment spans residues 649–668; it reads LLLLAVIQVPILLFLKPFYL. Topologically, residues 669 to 738 are cytoplasmic; it reads RWENNRARAK…EVMIHQVIHT (70 aa). A disordered region spans residues 689–710; it reads VSALDEDDEEDPSNGDDYEGAA. Over residues 692 to 707 the composition is skewed to acidic residues; the sequence is LDEDDEEDPSNGDDYE. A helical transmembrane segment spans residues 739 to 763; the sequence is IEFCLNSVSHTASYLRLWALSLAHQ. Residues 764 to 784 lie on the Vacuolar side of the membrane; that stretch reads QLSAVLWSMTMAKALESKGLG. Residues 785–823 form a helical membrane-spanning segment; the sequence is GAIFLVVAFAMFFVLSVIILIIMEGVSAMLHSLRLAWVE. Residues 824 to 856 lie on the Cytoplasmic side of the membrane; that stretch reads SFSKFAEFGGWPFTPFSFKQQLEESEELKEYIG.

This sequence belongs to the V-ATPase 116 kDa subunit family. V-ATPase is a heteromultimeric enzyme composed of a peripheral catalytic V1 complex (components A to H) attached to an integral membrane V0 proton pore complex (components: a, c, c', c'', d, e, f and VOA1).

The protein localises to the vacuole membrane. Its function is as follows. Subunit of the V0 complex of vacuolar(H+)-ATPase (V-ATPase), a multisubunit enzyme composed of a peripheral complex (V1) that hydrolyzes ATP and a membrane integral complex (V0) that translocates protons. V-ATPase is responsible for acidifying and maintaining the pH of intracellular compartments. The chain is V-type proton ATPase subunit a (vph-1) from Neurospora crassa (strain ATCC 24698 / 74-OR23-1A / CBS 708.71 / DSM 1257 / FGSC 987).